Reading from the N-terminus, the 187-residue chain is uncharacterized protein (187 aa).

The chain crosses the membrane as a helical span at residues 8 to 28 (ITFFIILLICLICILLLLVVF). Residues 99–153 (PLENRRDMEAEEENQINEKQEPENAGETGQEEDDGLQKIHTSVTRTPSVVESQKR) form a disordered region. Residues 137 to 149 (IHTSVTRTPSVVE) are compositionally biased toward polar residues.

The protein resides in the membrane. This is an uncharacterized protein from Homo sapiens (Human).